The chain runs to 46 residues: uncharacterized protein (46 aa).

The interval 1–46 (MEVTPLETGRARSHQKASTAAQPHAADEKMTGSTARRYLSQDHQSV) is disordered.

This is an uncharacterized protein from Treponema pallidum (strain Nichols).